We begin with the raw amino-acid sequence, 556 residues long: Urocanate hydratase (556 aa).

Residues 52–53 (GG), glutamine 130, 176–178 (GMG), glutamate 196, arginine 201, 242–243 (NA), 263–267 (QTSAH), 273–274 (YL), and tyrosine 322 each bind NAD(+). Cysteine 410 is a catalytic residue. Glycine 492 provides a ligand contact to NAD(+).

The protein belongs to the urocanase family. The cofactor is NAD(+).

Its subcellular location is the cytoplasm. It carries out the reaction 4-imidazolone-5-propanoate = trans-urocanate + H2O. The protein operates within amino-acid degradation; L-histidine degradation into L-glutamate; N-formimidoyl-L-glutamate from L-histidine: step 2/3. Catalyzes the conversion of urocanate to 4-imidazolone-5-propionate. The sequence is that of Urocanate hydratase from Shewanella woodyi (strain ATCC 51908 / MS32).